A 301-amino-acid polypeptide reads, in one-letter code: 2-methoxy-6-polyprenyl-1,4-benzoquinol methylase, mitochondrial (301 aa).

Residues 1–16 (MQTTRSTRLLSLARRF) constitute a mitochondrion transit peptide. A compositionally biased stretch (polar residues) spans 20–31 (RTASQSAQNSKG). A disordered region spans residues 20–44 (RTASQSAQNSKGMASGAESISGKEK). S-adenosyl-L-methionine contacts are provided by residues T111, D139, and 173-174 (DA).

Belongs to the class I-like SAM-binding methyltransferase superfamily. MenG/UbiE family. As to quaternary structure, component of a multi-subunit COQ enzyme complex.

It is found in the mitochondrion inner membrane. The enzyme catalyses a 2-methoxy-6-(all-trans-polyprenyl)benzene-1,4-diol + S-adenosyl-L-methionine = a 5-methoxy-2-methyl-3-(all-trans-polyprenyl)benzene-1,4-diol + S-adenosyl-L-homocysteine + H(+). It participates in cofactor biosynthesis; ubiquinone biosynthesis. Functionally, methyltransferase required for the conversion of 2-polyprenyl-6-methoxy-1,4-benzoquinol (DDMQH2) to 2-polyprenyl-3-methyl-6-methoxy-1,4-benzoquinol (DMQH2). This is 2-methoxy-6-polyprenyl-1,4-benzoquinol methylase, mitochondrial from Drosophila melanogaster (Fruit fly).